The chain runs to 516 residues: Flavonoid-6-hydroxylase (516 aa).

The helical transmembrane segment at 3-23 threads the bilayer; sequence FNAAVCAALAFISLLSYYLIW. C455 is a binding site for heme.

It belongs to the cytochrome P450 family. Requires heme as cofactor.

The protein localises to the membrane. It carries out the reaction genkwanin + reduced [NADPH--hemoprotein reductase] + O2 = scutellarein 7-methyl ether + oxidized [NADPH--hemoprotein reductase] + H2O. It catalyses the reaction (2S)-sakuranetin + reduced [NADPH--hemoprotein reductase] + O2 = (2S)-7-methylcarthamidin + oxidized [NADPH--hemoprotein reductase] + H2O + H(+). The enzyme catalyses apigenin 4',7-dimethyl ether + reduced [NADPH--hemoprotein reductase] + O2 = ladanein + oxidized [NADPH--hemoprotein reductase] + H2O + H(+). The catalysed reaction is (2S)-naringenin 4',7-dimethyl ether + reduced [NADPH--hemoprotein reductase] + O2 = (2S)-carthamidin-4',7-dimethyl ether + oxidized [NADPH--hemoprotein reductase] + H2O + H(+). Its pathway is flavonoid metabolism. 6-OH hydroxylase involved in the biosynthesis of polymethoxylated flavonoids natural products such as pebrellin, aroma compounds which contribute to the flavor of peppermint, and exhibit pharmacological activities such as anti-allergic, anti-oxidant, antibacterial, anti-proliferative, and anti-inflammatory effects. Catalyzes the 6-hydroxylation of 7-O-methylated precursors such as the conversion of genkwanin (GENK) to scutellarein-7-methyl ether (SCU7Me). Can also use apigenin-7,4'-dimethyl ether (AdM), naringenin-7-methyl ether (SAK) and naringenin-7,4'-dimethyl ether (NdM) as substrates. This Mentha piperita (Peppermint) protein is Flavonoid-6-hydroxylase.